The following is a 721-amino-acid chain: Ribonucleoside-diphosphate reductase subunit alpha (721 aa).

Substrate contacts are provided by residues threonine 159, 175 to 176 (SC), glycine 204, 384 to 388 (NLCSE), and 589 to 593 (PTGSI). Cysteine 176 and cysteine 413 are joined by a disulfide. The Proton acceptor role is filled by asparagine 384. Cysteine 386 functions as the Cysteine radical intermediate in the catalytic mechanism. Residue glutamate 388 is the Proton acceptor of the active site.

This sequence belongs to the ribonucleoside diphosphate reductase large chain family. As to quaternary structure, tetramer of two alpha and two beta subunits.

It carries out the reaction a 2'-deoxyribonucleoside 5'-diphosphate + [thioredoxin]-disulfide + H2O = a ribonucleoside 5'-diphosphate + [thioredoxin]-dithiol. Its activity is regulated as follows. Under complex allosteric control mediated by deoxynucleoside triphosphates and ATP binding. The type of nucleotide bound at the specificity site determines substrate preference. It seems probable that ATP makes the enzyme reduce CDP and UDP, dGTP favors ADP reduction and dTTP favors GDP reduction. Its function is as follows. Provides the precursors necessary for DNA synthesis. Catalyzes the biosynthesis of deoxyribonucleotides from the corresponding ribonucleotides. In Mycoplasma genitalium (strain ATCC 33530 / DSM 19775 / NCTC 10195 / G37) (Mycoplasmoides genitalium), this protein is Ribonucleoside-diphosphate reductase subunit alpha (nrdE).